The primary structure comprises 770 residues: Lysine-specific histone demethylase 1 (770 aa).

The disordered stretch occupies residues 1–21; sequence MSSDTGSEYLDEEIRGDELGP. The region spanning 28–126 is the SWIRM domain; it reads LAAAASAARL…FGRYVRSTKI (99 aa). 137–165 is a binding site for FAD; that stretch reads VIVIGAGAAGISAATQLESFGFDVIVLEA. The interval 718-739 is disordered; the sequence is NEAVADIPNAPNAPNAQKPEEI.

Belongs to the flavin monoamine oxidase family. As to quaternary structure, probably part of a large repressor complex. Interacts with CoREST protein spr-1. Interacts with chromobox protein homolog hpl-1. Requires FAD as cofactor.

Its subcellular location is the nucleus. The catalysed reaction is N(6),N(6)-dimethyl-L-lysyl(4)-[histone H3] + 2 A + 2 H2O = L-lysyl(4)-[histone H3] + 2 formaldehyde + 2 AH2. Its function is as follows. Histone demethylase that specifically demethylates 'Lys-4' of histone H3, a specific tag for epigenetic transcriptional activation, thereby acting as a corepressor. Acts by oxidizing the substrate by FAD to generate the corresponding imine that is subsequently hydrolyzed. Demethylates both mono- and di-methylated 'Lys-4' of histone H3. May be involved in H3 demethylation in mitotic cells including gut and embryonic cells. Participates in the transcriptional repression of the presenilin protein hop-1. May act via the formation of a multiprotein complex that remodel or modify the chromatin. Together with met-2, set-17 and set-26, required for transgenerational fertility. Plays a role in developmental growth and lifespan regulation in response to ultraviolet-induced damage. This is Lysine-specific histone demethylase 1 from Caenorhabditis elegans.